A 694-amino-acid polypeptide reads, in one-letter code: Methionine--tRNA ligase (694 aa).

The 'HIGH' region motif lies at 12 to 22 (PYANGPLHLGH). Zn(2+)-binding residues include cysteine 143, cysteine 146, cysteine 156, and cysteine 159. Positions 330–334 (KMSKS) match the 'KMSKS' region motif. Residue lysine 333 coordinates ATP. The disordered stretch occupies residues 552-577 (APAAPAATTKPAPSKADAAPAAVANP). One can recognise a tRNA-binding domain in the interval 591-694 (DFAKLDLRIG…AGAQPGMPVR (104 aa)).

It belongs to the class-I aminoacyl-tRNA synthetase family. MetG type 1 subfamily. As to quaternary structure, homodimer. Requires Zn(2+) as cofactor.

It is found in the cytoplasm. It carries out the reaction tRNA(Met) + L-methionine + ATP = L-methionyl-tRNA(Met) + AMP + diphosphate. Functionally, is required not only for elongation of protein synthesis but also for the initiation of all mRNA translation through initiator tRNA(fMet) aminoacylation. In Xanthomonas campestris pv. campestris (strain B100), this protein is Methionine--tRNA ligase.